Reading from the N-terminus, the 300-residue chain is Dipeptide transport system permease protein DppC (300 aa).

At 1 to 31 the chain is on the cytoplasmic side; it reads MSQVTENKVISAPVPMTPLQEFWHYFKRNKG. Residues 32–52 form a helical membrane-spanning segment; it reads AVVGLVYVVIVLFIAIFANWI. Topologically, residues 53-101 are periplasmic; it reads APYNPAEQFRDALLAPPAWQEGGSMAHLLGTDDVGRDVLSRLMYGARLS. An ABC transmembrane type-1 domain is found at 98-287; it reads ARLSLLVGCL…LTVLAFNLMG (190 aa). Residues 102–122 form a helical membrane-spanning segment; sequence LLVGCLVVVLSLIMGVILGLI. Topologically, residues 123 to 136 are cytoplasmic; it reads AGYFGGLVDNIIMR. Residues 137–157 traverse the membrane as a helical segment; sequence VVDIMLALPSLLLALVLVAIF. Residues 158–206 lie on the Periplasmic side of the membrane; that stretch reads GPSIGNAALALTFVALPHYVRLTRAAVLVEVNRDYVTASRVAGAGAMRQ. A helical transmembrane segment spans residues 207–227; sequence MFINIFPNCLAPLIVQASLGF. Residues 228–230 are Cytoplasmic-facing; the sequence is SNA. The chain crosses the membrane as a helical span at residues 231-251; it reads ILDMAALGFLGMGAQPPTPEW. The Periplasmic segment spans residues 252–265; it reads GTMLSDVLQFAQSA. A helical transmembrane segment spans residues 266-286; the sequence is WWVVTFPGLAILLTVLAFNLM. The Cytoplasmic segment spans residues 287-300; sequence GDGLRDALDPKLKQ.

Belongs to the binding-protein-dependent transport system permease family. OppBC subfamily. The complex is composed of two ATP-binding proteins (DppD and DppF), two transmembrane proteins (DppB and DppC) and a solute-binding protein (DppA).

The protein localises to the cell inner membrane. Part of the ABC transporter DppABCDF involved in dipeptide transport. Responsible for the translocation of the substrate across the membrane. In Escherichia coli O157:H7, this protein is Dipeptide transport system permease protein DppC (dppC).